The chain runs to 193 residues: 3-isopropylmalate dehydratase small subunit (193 aa).

The protein belongs to the LeuD family. LeuD type 1 subfamily. Heterodimer of LeuC and LeuD.

The catalysed reaction is (2R,3S)-3-isopropylmalate = (2S)-2-isopropylmalate. It participates in amino-acid biosynthesis; L-leucine biosynthesis; L-leucine from 3-methyl-2-oxobutanoate: step 2/4. Catalyzes the isomerization between 2-isopropylmalate and 3-isopropylmalate, via the formation of 2-isopropylmaleate. In Listeria monocytogenes serotype 4b (strain CLIP80459), this protein is 3-isopropylmalate dehydratase small subunit.